The following is a 360-amino-acid chain: NAD(P)H-quinone oxidoreductase subunit 1, chloroplastic (360 aa).

The next 8 helical transmembrane spans lie at 30–50 (FLPIFSLVVGIVTGVLVLVWL), 98–118 (FSIGPSLAVISILLSYSVIPF), 127–147 (FNIGIFLWIAISSIAPIGLLM), 165–185 (AAQSISYEIPLTLCLLSISLL), 203–223 (FWGWNLWRQPIGFIIFLISSL), 253–273 (FGLFYVASYLNLLISSLFVTV), 297–317 (IFGTTIGIFITLAKTYLFLFI), and 340–360 (FLLPISLGNLLLTTSFQVFSL).

This sequence belongs to the complex I subunit 1 family. In terms of assembly, NDH is composed of at least 16 different subunits, 5 of which are encoded in the nucleus.

The protein resides in the plastid. It is found in the chloroplast thylakoid membrane. It carries out the reaction a plastoquinone + NADH + (n+1) H(+)(in) = a plastoquinol + NAD(+) + n H(+)(out). It catalyses the reaction a plastoquinone + NADPH + (n+1) H(+)(in) = a plastoquinol + NADP(+) + n H(+)(out). In terms of biological role, NDH shuttles electrons from NAD(P)H:plastoquinone, via FMN and iron-sulfur (Fe-S) centers, to quinones in the photosynthetic chain and possibly in a chloroplast respiratory chain. The immediate electron acceptor for the enzyme in this species is believed to be plastoquinone. Couples the redox reaction to proton translocation, and thus conserves the redox energy in a proton gradient. The chain is NAD(P)H-quinone oxidoreductase subunit 1, chloroplastic from Aethionema cordifolium (Lebanon stonecress).